Consider the following 351-residue polypeptide: MGSQSLNSTFLKVRRLSLISSNERLLGQTSGLATGSRLVTQEVDDLRVIPGSRPDLDDHQPQCSLAELPSTAHGKRKPGHLPRLRSSAVKGHAPDPNPSLSIVSKRIFKGESVIKGPEDRQTFVGPSGLPKISPKATAGEAQGKKRTMELLNKARKQEEKVSNLLDIRQLPKQEVFINNTHPCKKHLKQQPMSLEEWRRGHLGGDNTGLISQEPFRCCKRLGKKAQCQLLEVTSLEAEASLEVLKRRRRMQAMEMSKKPQDRGLGQEKAVFLSREKVKPSSHDMHLSTAERSFKPKSMPKAEDWDLSVQGTPVVLTVRDHSNVSQAQKHLGCAEIFHSRDGRCTLLKRGGA.

Disordered stretches follow at residues 69–101 (PSTA…PSLS), 117–144 (PEDR…AQGK), and 275–298 (EKVK…PKSM). Basic residues predominate over residues 73 to 83 (HGKRKPGHLPR). Residues 275-285 (EKVKPSSHDMH) show a composition bias toward basic and acidic residues.

As to expression, specific to testis, where it is expressed in spermatogonia.

The protein localises to the nucleus. Its function is as follows. Nuclear factor which might have a role in spermatogenesis. This Mus musculus (Mouse) protein is Protein Tex24.